A 131-amino-acid polypeptide reads, in one-letter code: Amicyanin (131 aa).

A signal peptide spans 1–26 (MISATKIRSCLAACVLAAFGATGALA). The 105-residue stretch at 27-131 (DKATIPSESP…PFMRGKVVVE (105 aa)) folds into the Plastocyanin-like domain. Residues His-79, Cys-118, His-121, and Met-124 each contribute to the Cu cation site.

Cu cation is required as a cofactor.

The protein localises to the periplasm. Its pathway is one-carbon metabolism; methylamine degradation. Its function is as follows. Primary acceptor of electrons from methylamine dehydrogenase. Passes those electrons on either a soluble cytochrome c or to pseudoazurin. This Paracoccus denitrificans protein is Amicyanin (mauC).